The chain runs to 152 residues: D-aminoacyl-tRNA deacylase (152 aa).

The Gly-cisPro motif, important for rejection of L-amino acids motif lies at glycine 142–proline 143.

It belongs to the DTD family. As to quaternary structure, homodimer.

The protein resides in the cytoplasm. It carries out the reaction glycyl-tRNA(Ala) + H2O = tRNA(Ala) + glycine + H(+). The enzyme catalyses a D-aminoacyl-tRNA + H2O = a tRNA + a D-alpha-amino acid + H(+). Its function is as follows. An aminoacyl-tRNA editing enzyme that deacylates mischarged D-aminoacyl-tRNAs. Also deacylates mischarged glycyl-tRNA(Ala), protecting cells against glycine mischarging by AlaRS. Acts via tRNA-based rather than protein-based catalysis; rejects L-amino acids rather than detecting D-amino acids in the active site. By recycling D-aminoacyl-tRNA to D-amino acids and free tRNA molecules, this enzyme counteracts the toxicity associated with the formation of D-aminoacyl-tRNA entities in vivo and helps enforce protein L-homochirality. The sequence is that of D-aminoacyl-tRNA deacylase from Burkholderia mallei (strain NCTC 10247).